Consider the following 277-residue polypeptide: Large ribosomal subunit protein uL2 (277 aa).

Residues T219–K277 are disordered. The span at A264–K277 shows a compositional bias: basic and acidic residues.

The protein belongs to the universal ribosomal protein uL2 family. Part of the 50S ribosomal subunit. Forms a bridge to the 30S subunit in the 70S ribosome.

Functionally, one of the primary rRNA binding proteins. Required for association of the 30S and 50S subunits to form the 70S ribosome, for tRNA binding and peptide bond formation. It has been suggested to have peptidyltransferase activity; this is somewhat controversial. Makes several contacts with the 16S rRNA in the 70S ribosome. The protein is Large ribosomal subunit protein uL2 of Streptococcus sanguinis (strain SK36).